Consider the following 151-residue polypeptide: Ribosome maturation factor RimP (151 aa).

The protein belongs to the RimP family.

The protein resides in the cytoplasm. Functionally, required for maturation of 30S ribosomal subunits. In Vibrio cholerae serotype O1 (strain ATCC 39541 / Classical Ogawa 395 / O395), this protein is Ribosome maturation factor RimP.